The chain runs to 429 residues: 4-hydroxybutyrate coenzyme A transferase (429 aa).

Position 215–219 (215–219 (GIGAI)) interacts with CoA. Glu-238 (5-glutamyl coenzyme A thioester intermediate) is an active-site residue. Position 336 (Gly-336) interacts with CoA.

Belongs to the acetyl-CoA hydrolase/transferase family.

This chain is 4-hydroxybutyrate coenzyme A transferase (cat2), found in Clostridium kluyveri (strain ATCC 8527 / DSM 555 / NBRC 12016 / NCIMB 10680 / K1).